The primary structure comprises 247 residues: UDP-2,3-diacylglucosamine hydrolase (247 aa).

Positions 8, 10, 41, 79, and 114 each coordinate Mn(2+). 79 to 80 contributes to the substrate binding site; the sequence is NR. Residues Asp-122, Ser-160, Asp-171, Gln-174, and His-202 each contribute to the substrate site. Residues His-202 and His-204 each contribute to the Mn(2+) site.

This sequence belongs to the LpxH family. Mn(2+) serves as cofactor.

The protein resides in the cell inner membrane. The enzyme catalyses UDP-2-N,3-O-bis[(3R)-3-hydroxytetradecanoyl]-alpha-D-glucosamine + H2O = 2-N,3-O-bis[(3R)-3-hydroxytetradecanoyl]-alpha-D-glucosaminyl 1-phosphate + UMP + 2 H(+). Its pathway is glycolipid biosynthesis; lipid IV(A) biosynthesis; lipid IV(A) from (3R)-3-hydroxytetradecanoyl-[acyl-carrier-protein] and UDP-N-acetyl-alpha-D-glucosamine: step 4/6. Hydrolyzes the pyrophosphate bond of UDP-2,3-diacylglucosamine to yield 2,3-diacylglucosamine 1-phosphate (lipid X) and UMP by catalyzing the attack of water at the alpha-P atom. Involved in the biosynthesis of lipid A, a phosphorylated glycolipid that anchors the lipopolysaccharide to the outer membrane of the cell. The sequence is that of UDP-2,3-diacylglucosamine hydrolase from Xanthomonas campestris pv. campestris (strain B100).